The primary structure comprises 265 residues: 4-hydroxy-tetrahydrodipicolinate reductase (265 aa).

NAD(+) is bound by residues 7–12 (GASGRM), Asp33, 96–98 (GTT), and 120–123 (AANF). Catalysis depends on His153, which acts as the Proton donor/acceptor. Residue His154 participates in (S)-2,3,4,5-tetrahydrodipicolinate binding. Catalysis depends on Lys157, which acts as the Proton donor. A (S)-2,3,4,5-tetrahydrodipicolinate-binding site is contributed by 163-164 (GT).

It belongs to the DapB family.

The protein localises to the cytoplasm. It carries out the reaction (S)-2,3,4,5-tetrahydrodipicolinate + NAD(+) + H2O = (2S,4S)-4-hydroxy-2,3,4,5-tetrahydrodipicolinate + NADH + H(+). The catalysed reaction is (S)-2,3,4,5-tetrahydrodipicolinate + NADP(+) + H2O = (2S,4S)-4-hydroxy-2,3,4,5-tetrahydrodipicolinate + NADPH + H(+). It participates in amino-acid biosynthesis; L-lysine biosynthesis via DAP pathway; (S)-tetrahydrodipicolinate from L-aspartate: step 4/4. Its function is as follows. Catalyzes the conversion of 4-hydroxy-tetrahydrodipicolinate (HTPA) to tetrahydrodipicolinate. The chain is 4-hydroxy-tetrahydrodipicolinate reductase from Cupriavidus necator (strain ATCC 17699 / DSM 428 / KCTC 22496 / NCIMB 10442 / H16 / Stanier 337) (Ralstonia eutropha).